The primary structure comprises 201 residues: Segregation and condensation protein B (201 aa).

The protein belongs to the ScpB family. As to quaternary structure, homodimer. Homodimerization may be required to stabilize the binding of ScpA to the Smc head domains. Component of a cohesin-like complex composed of ScpA, ScpB and the Smc homodimer, in which ScpA and ScpB bind to the head domain of Smc. The presence of the three proteins is required for the association of the complex with DNA.

It localises to the cytoplasm. In terms of biological role, participates in chromosomal partition during cell division. May act via the formation of a condensin-like complex containing Smc and ScpA that pull DNA away from mid-cell into both cell halves. The sequence is that of Segregation and condensation protein B from Enterococcus faecalis (strain ATCC 700802 / V583).